We begin with the raw amino-acid sequence, 271 residues long: MPELPEVETTRRGILPHLEGKRVKAVSVRNRSLRWPIPADLAQQIQNKTLRTIHRRGKYLLLEFANGHVIWHLGMSGSLRIIKADEPPMVHDHVDIAFGGNLALRYTDPRRFGAVLWTNEAILEHKLLNHLGPEPLTDAFNSAYLFDKSRKRSQSVKTWIMDSKVVVGVGNIYANEALFNSAIHPLKAAGKLSQKQCDIFCSEIKSVLAKAIEQGGTTLRDFVGGDGKPGYFAQELNVYGRGGKACKKCRKPLTEKKLGQRTTVYCTHCQK.

P2 functions as the Schiff-base intermediate with DNA in the catalytic mechanism. E3 functions as the Proton donor in the catalytic mechanism. K58 functions as the Proton donor; for beta-elimination activity in the catalytic mechanism. 3 residues coordinate DNA: H91, R110, and R152. The FPG-type zinc-finger motif lies at 237-271 (NVYGRGGKACKKCRKPLTEKKLGQRTTVYCTHCQK). The Proton donor; for delta-elimination activity role is filled by R261.

It belongs to the FPG family. Monomer. The cofactor is Zn(2+).

It catalyses the reaction Hydrolysis of DNA containing ring-opened 7-methylguanine residues, releasing 2,6-diamino-4-hydroxy-5-(N-methyl)formamidopyrimidine.. The enzyme catalyses 2'-deoxyribonucleotide-(2'-deoxyribose 5'-phosphate)-2'-deoxyribonucleotide-DNA = a 3'-end 2'-deoxyribonucleotide-(2,3-dehydro-2,3-deoxyribose 5'-phosphate)-DNA + a 5'-end 5'-phospho-2'-deoxyribonucleoside-DNA + H(+). Its function is as follows. Involved in base excision repair of DNA damaged by oxidation or by mutagenic agents. Acts as a DNA glycosylase that recognizes and removes damaged bases. Has a preference for oxidized purines, such as 7,8-dihydro-8-oxoguanine (8-oxoG). Has AP (apurinic/apyrimidinic) lyase activity and introduces nicks in the DNA strand. Cleaves the DNA backbone by beta-delta elimination to generate a single-strand break at the site of the removed base with both 3'- and 5'-phosphates. This Saccharophagus degradans (strain 2-40 / ATCC 43961 / DSM 17024) protein is Formamidopyrimidine-DNA glycosylase.